We begin with the raw amino-acid sequence, 436 residues long: UPF0597 protein YhaM (436 aa).

The protein belongs to the UPF0597 family.

This is UPF0597 protein YhaM from Escherichia coli O7:K1 (strain IAI39 / ExPEC).